The sequence spans 177 residues: Adenine phosphoribosyltransferase (177 aa).

This sequence belongs to the purine/pyrimidine phosphoribosyltransferase family. As to quaternary structure, homodimer.

It is found in the cytoplasm. It catalyses the reaction AMP + diphosphate = 5-phospho-alpha-D-ribose 1-diphosphate + adenine. It functions in the pathway purine metabolism; AMP biosynthesis via salvage pathway; AMP from adenine: step 1/1. Its function is as follows. Catalyzes a salvage reaction resulting in the formation of AMP, that is energically less costly than de novo synthesis. The polypeptide is Adenine phosphoribosyltransferase (Mycobacteroides abscessus (strain ATCC 19977 / DSM 44196 / CCUG 20993 / CIP 104536 / JCM 13569 / NCTC 13031 / TMC 1543 / L948) (Mycobacterium abscessus)).